A 225-amino-acid chain; its full sequence is Insulin-induced gene 2 protein (225 aa).

Over 1 to 28 (MAEGETESPRPKKRGPYISSVTSQSVNV) the chain is Cytoplasmic. The helical transmembrane segment at 29–51 (VIRGVVLFFIGVFLALVLNLLQI) threads the bilayer. Residues 52-70 (QRNVTLFPPDVITSIFSSA) are Lumenal-facing. A helical membrane pass occupies residues 71–88 (WWVPPCCGTASAVIGLLY). The Cytoplasmic portion of the chain corresponds to 89-103 (PCIDRHLGEPHKFKR). Residues 104 to 126 (EWSSVMRCVAVFVGINHASAKVD) form a helical membrane-spanning segment. The Lumenal segment spans residues 127–129 (FDN). Residues 130 to 148 (NFQFSLTLAALSVGLWWTF) form a helical membrane-spanning segment. Topologically, residues 149-153 (DRSRS) are cytoplasmic. S151 carries the phosphoserine modification. A helical membrane pass occupies residues 154-175 (GFGLGVGIAFLATVVTQLLVYN). The Lumenal segment spans residues 176 to 189 (GVYQYTSPDFLYVR). A helical membrane pass occupies residues 190–207 (SWLPCIFFAGGITMGNIG). The Cytoplasmic portion of the chain corresponds to 208–225 (RQLAMYECKVIAEKSHQE). C215 carries the post-translational modification Cysteine sulfenic acid (-SOH); alternate. A Glycyl cysteine thioester (Cys-Gly) (interchain with G-Cter in ubiquitin); alternate cross-link involves residue C215. A KxHxx motif is present at residues 219–225 (AEKSHQE).

It belongs to the INSIG family. Interacts with SCAP; interaction is direct and only takes place in the presence of sterols; it prevents interaction between SCAP and the coat protein complex II (COPII). Associates with the SCAP-SREBP complex (composed of SCAP and SREBF1/SREBP1 or SREBF2/SREBP2); association is mediated via its interaction with SCAP and only takes place in the presence of sterols. Interacts with RNF139. Interacts with RNF145. In terms of processing, phosphorylation at Ser-151 by PCK1 reduces binding to oxysterol, disrupting the interaction between INSIG2 and SCAP, thereby promoting nuclear translocation of SREBP proteins (SREBF1/SREBP1 or SREBF2/SREBP2) and subsequent transcription of downstream lipogenesis-related genes. Polyubiquitinated by AMFR/gp78 at Cys-215 in some tissues such as adipose tissues, undifferentiated myoblasts and liver, leading to its degradation. In differentiated myotubes, Cys-215 oxidation prevents ubiquitination at the same site, resulting in protein stabilization. Post-translationally, oxidized at Cys-215 in differentiated myotubes, preventing ubiquitination at the same site, and resulting in protein stabilization.

Its subcellular location is the endoplasmic reticulum membrane. Functionally, oxysterol-binding protein that mediates feedback control of cholesterol synthesis by controlling both endoplasmic reticulum to Golgi transport of SCAP and degradation of HMGCR. Acts as a negative regulator of cholesterol biosynthesis by mediating the retention of the SCAP-SREBP complex in the endoplasmic reticulum, thereby blocking the processing of sterol regulatory element-binding proteins (SREBPs) SREBF1/SREBP1 and SREBF2/SREBP2. Binds oxysterol, including 22-hydroxycholesterol, 24-hydroxycholesterol, 25-hydroxycholesterol and 27-hydroxycholesterol, regulating interaction with SCAP and retention of the SCAP-SREBP complex in the endoplasmic reticulum. In presence of oxysterol, interacts with SCAP, retaining the SCAP-SREBP complex in the endoplasmic reticulum, thereby preventing SCAP from escorting SREBF1/SREBP1 and SREBF2/SREBP2 to the Golgi. Sterol deprivation or phosphorylation by PCK1 reduce oxysterol-binding, disrupting the interaction between INSIG2 and SCAP, thereby promoting Golgi transport of the SCAP-SREBP complex, followed by processing and nuclear translocation of SREBF1/SREBP1 and SREBF2/SREBP2. Also regulates cholesterol synthesis by regulating degradation of HMGCR: initiates the sterol-mediated ubiquitin-mediated endoplasmic reticulum-associated degradation (ERAD) of HMGCR via recruitment of the reductase to the ubiquitin ligase RNF139. The sequence is that of Insulin-induced gene 2 protein from Rattus norvegicus (Rat).